Reading from the N-terminus, the 728-residue chain is Leucine-rich repeat and calponin homology domain-containing protein 1 (728 aa).

Over residues 24–36 (HHPHHHHHHHQHH) the composition is skewed to basic residues. Residues 24–57 (HHPHHHHHHHQHHGGTGAPGGAGGGGGGSGGFNL) are disordered. Gly residues predominate over residues 37–54 (GGTGAPGGAGGGGGGSGG). 9 LRR repeats span residues 98 to 119 (DTVQ…LCHF), 121 to 143 (SLEI…VNLQ), 144 to 166 (MLTY…CGLP), 167 to 187 (LKVL…IGQL), 189 to 210 (QLME…IGQL), 212 to 234 (SLRE…VDLS), 235 to 255 (LVKF…FREM), 257 to 278 (QLQV…ICTK), and 283 to 304 (IFKY…YLHT). A compositionally biased stretch (basic and acidic residues) spans 311 to 322 (HQHVEDGKKDSD). Residues 311-348 (HQHVEDGKKDSDSGVGSDNGDKRLSATEPSDEDTVSLN) form a disordered region. Phosphoserine is present on S370. The segment at 377–398 (HQEFQPEPSLLGDSTNSGEERD) is disordered. S409 carries the phosphoserine modification. Polar residues predominate over residues 516 to 525 (LQSNGSQYSP). Residues 516 to 547 (LQSNGSQYSPNEIRENSPAVSPTTNSTAPFGL) form a disordered region. Residues S532 and S536 each carry the phosphoserine modification. The span at 533 to 543 (PAVSPTTNSTA) shows a compositional bias: polar residues. Phosphothreonine is present on T568. The region spanning 576–692 (MREEKELVEQ…TLLALGEKAP (117 aa)) is the Calponin-homology (CH) domain.

As to quaternary structure, interacts (via LRR repeats) with unphosphorylated DOCK8 (via DHR-2 domain); the interaction prevents the interaction between DOCK8 and CDC42.

It is found in the cytoplasm. Its function is as follows. Acts as a negative regulator of GTPase CDC42 by sequestering CDC42-guanine exchange factor DOCK8. Probably by preventing CDC42 activation, negatively regulates CD4(+) T-cell migration. In Homo sapiens (Human), this protein is Leucine-rich repeat and calponin homology domain-containing protein 1 (LRCH1).